The sequence spans 511 residues: GMP synthase [glutamine-hydrolyzing] (511 aa).

The region spanning 6 to 196 is the Glutamine amidotransferase type-1 domain; that stretch reads LVLVLDFGSQ…VFDVCGCTGD (191 aa). Residue C83 is the Nucleophile of the active site. Catalysis depends on residues H170 and E172. In terms of domain architecture, GMPS ATP-PPase spans 197 to 386; that stretch reads WSIENFIDME…LGVPDRIVWR (190 aa). 224-230 contributes to the ATP binding site; the sequence is SGGVDSS.

In terms of assembly, homodimer.

It catalyses the reaction XMP + L-glutamine + ATP + H2O = GMP + L-glutamate + AMP + diphosphate + 2 H(+). It participates in purine metabolism; GMP biosynthesis; GMP from XMP (L-Gln route): step 1/1. Catalyzes the synthesis of GMP from XMP. In Oceanobacillus iheyensis (strain DSM 14371 / CIP 107618 / JCM 11309 / KCTC 3954 / HTE831), this protein is GMP synthase [glutamine-hydrolyzing].